The chain runs to 664 residues: DNA ligase (664 aa).

Residues 32-36 (DKEYD) and 80-81 (SL) contribute to the NAD(+) site. The active-site N6-AMP-lysine intermediate is lysine 122. NAD(+)-binding residues include arginine 144, glutamate 178, and lysine 314. Zn(2+) contacts are provided by cysteine 407, cysteine 410, cysteine 423, and cysteine 429. The 78-residue stretch at 587–664 (IDENPFMDKT…NEEEFSNKIK (78 aa)) folds into the BRCT domain.

It belongs to the NAD-dependent DNA ligase family. LigA subfamily. Requires Mg(2+) as cofactor. The cofactor is Mn(2+).

It carries out the reaction NAD(+) + (deoxyribonucleotide)n-3'-hydroxyl + 5'-phospho-(deoxyribonucleotide)m = (deoxyribonucleotide)n+m + AMP + beta-nicotinamide D-nucleotide.. Its function is as follows. DNA ligase that catalyzes the formation of phosphodiester linkages between 5'-phosphoryl and 3'-hydroxyl groups in double-stranded DNA using NAD as a coenzyme and as the energy source for the reaction. It is essential for DNA replication and repair of damaged DNA. In Clostridium botulinum (strain Okra / Type B1), this protein is DNA ligase.